We begin with the raw amino-acid sequence, 76 residues long: DNA-binding protein S1FA2 (76 aa).

The Nuclear localization signal signature appears at 50–55 (PPRKKK). Residues 51 to 66 (PRKKKPLSKKKLKREK) are compositionally biased toward basic residues. The interval 51 to 76 (PRKKKPLSKKKLKREKLKQGVPVPGE) is disordered.

This sequence belongs to the S1FA transcription factor family.

It is found in the nucleus. Functionally, DNA-binding protein that specifically recognizes a negative element (S1F) within the RPS1 promoter. The sequence is that of DNA-binding protein S1FA2 (S1FA2) from Arabidopsis thaliana (Mouse-ear cress).